Consider the following 396-residue polypeptide: 1-deoxy-D-xylulose 5-phosphate reductoisomerase (396 aa).

8 residues coordinate NADPH: threonine 10, glycine 11, serine 12, isoleucine 13, glycine 36, lysine 37, asparagine 38, and asparagine 124. Lysine 125 serves as a coordination point for 1-deoxy-D-xylulose 5-phosphate. An NADPH-binding site is contributed by glutamate 126. A Mn(2+)-binding site is contributed by aspartate 150. 1-deoxy-D-xylulose 5-phosphate-binding residues include serine 151, glutamate 152, serine 186, and histidine 209. Glutamate 152 lines the Mn(2+) pocket. Glycine 215 is an NADPH binding site. 1-deoxy-D-xylulose 5-phosphate contacts are provided by serine 222, asparagine 227, lysine 228, and glutamate 231. Glutamate 231 serves as a coordination point for Mn(2+).

Belongs to the DXR family. Mg(2+) serves as cofactor. Requires Mn(2+) as cofactor.

It carries out the reaction 2-C-methyl-D-erythritol 4-phosphate + NADP(+) = 1-deoxy-D-xylulose 5-phosphate + NADPH + H(+). It participates in isoprenoid biosynthesis; isopentenyl diphosphate biosynthesis via DXP pathway; isopentenyl diphosphate from 1-deoxy-D-xylulose 5-phosphate: step 1/6. Catalyzes the NADPH-dependent rearrangement and reduction of 1-deoxy-D-xylulose-5-phosphate (DXP) to 2-C-methyl-D-erythritol 4-phosphate (MEP). This Glaesserella parasuis serovar 5 (strain SH0165) (Haemophilus parasuis) protein is 1-deoxy-D-xylulose 5-phosphate reductoisomerase.